The chain runs to 109 residues: Fluoride-specific ion channel FluC (109 aa).

3 consecutive transmembrane segments (helical) span residues 21 to 41 (FFLNNNLLVGVIGSFVYGFVI), 52 to 72 (ILLTGFCSCFTSFSGFVLFLY), and 83 to 103 (LFFYLNIIIVLNLIIMYAGFL).

This sequence belongs to the fluoride channel Fluc/FEX (TC 1.A.43) family.

Its subcellular location is the cell inner membrane. The enzyme catalyses fluoride(in) = fluoride(out). Functionally, fluoride-specific ion channel. Important for reducing fluoride concentration in the cell, thus reducing its toxicity. The sequence is that of Fluoride-specific ion channel FluC from Prochlorococcus marinus (strain MIT 9515).